The chain runs to 387 residues: 3-ketoacyl-CoA thiolase (387 aa).

Catalysis depends on cysteine 91, which acts as the Acyl-thioester intermediate. Catalysis depends on proton acceptor residues histidine 343 and cysteine 373.

It belongs to the thiolase-like superfamily. Thiolase family. In terms of assembly, heterotetramer of two alpha chains (FadB) and two beta chains (FadA).

The protein resides in the cytoplasm. The catalysed reaction is an acyl-CoA + acetyl-CoA = a 3-oxoacyl-CoA + CoA. Its pathway is lipid metabolism; fatty acid beta-oxidation. Its function is as follows. Catalyzes the final step of fatty acid oxidation in which acetyl-CoA is released and the CoA ester of a fatty acid two carbons shorter is formed. This chain is 3-ketoacyl-CoA thiolase, found in Escherichia fergusonii (strain ATCC 35469 / DSM 13698 / CCUG 18766 / IAM 14443 / JCM 21226 / LMG 7866 / NBRC 102419 / NCTC 12128 / CDC 0568-73).